The sequence spans 121 residues: Flagellar protein FliT (121 aa).

A required for homodimerization region spans residues 1–50 (MNNAPHLYFAWQQLVEKSQLMLRLATEEQWDELIASEMAYVNAVQEIAHL). Residues 60 to 98 (MQEQLRPMLHLILDNESKVKQLLQIRMDELAKLVGQSSV) form a fliD binding region.

The protein belongs to the FliT family. Homodimer. Interacts with FliD and FlhC.

It localises to the cytoplasm. The protein localises to the cytosol. Functionally, dual-function protein that regulates the transcription of class 2 flagellar operons and that also acts as an export chaperone for the filament-capping protein FliD. As a transcriptional regulator, acts as an anti-FlhDC factor; it directly binds FlhC, thus inhibiting the binding of the FlhC/FlhD complex to class 2 promoters, resulting in decreased expression of class 2 flagellar operons. As a chaperone, effects FliD transition to the membrane by preventing its premature polymerization, and by directing it to the export apparatus. The chain is Flagellar protein FliT from Escherichia coli O17:K52:H18 (strain UMN026 / ExPEC).